Here is a 547-residue protein sequence, read N- to C-terminus: Chaperonin GroEL (547 aa).

ATP-binding positions include 30–33 (TLGP), Lys51, 87–91 (DGTTT), Gly415, 479–481 (NAA), and Asp495.

This sequence belongs to the chaperonin (HSP60) family. In terms of assembly, forms a cylinder of 14 subunits composed of two heptameric rings stacked back-to-back. Interacts with the co-chaperonin GroES.

It localises to the cytoplasm. The enzyme catalyses ATP + H2O + a folded polypeptide = ADP + phosphate + an unfolded polypeptide.. Together with its co-chaperonin GroES, plays an essential role in assisting protein folding. The GroEL-GroES system forms a nano-cage that allows encapsulation of the non-native substrate proteins and provides a physical environment optimized to promote and accelerate protein folding. The polypeptide is Chaperonin GroEL (Pseudomonas fluorescens (strain ATCC BAA-477 / NRRL B-23932 / Pf-5)).